The sequence spans 109 residues: Flagellar hook-basal body complex protein FliE (109 aa).

The protein belongs to the FliE family.

It localises to the bacterial flagellum basal body. This is Flagellar hook-basal body complex protein FliE from Pseudomonas savastanoi pv. phaseolicola (strain 1448A / Race 6) (Pseudomonas syringae pv. phaseolicola (strain 1448A / Race 6)).